An 878-amino-acid polypeptide reads, in one-letter code: Phosphoenolpyruvate carboxylase (878 aa).

Residues H137 and K545 contribute to the active site.

This sequence belongs to the PEPCase type 1 family. Mg(2+) is required as a cofactor.

The enzyme catalyses oxaloacetate + phosphate = phosphoenolpyruvate + hydrogencarbonate. Its function is as follows. Forms oxaloacetate, a four-carbon dicarboxylic acid source for the tricarboxylic acid cycle. The protein is Phosphoenolpyruvate carboxylase of Proteus mirabilis (strain HI4320).